A 293-amino-acid polypeptide reads, in one-letter code: tRNA pseudouridine synthase B (293 aa).

The active-site Nucleophile is the D38.

The protein belongs to the pseudouridine synthase TruB family. Type 1 subfamily.

It carries out the reaction uridine(55) in tRNA = pseudouridine(55) in tRNA. In terms of biological role, responsible for synthesis of pseudouridine from uracil-55 in the psi GC loop of transfer RNAs. The chain is tRNA pseudouridine synthase B from Solibacter usitatus (strain Ellin6076).